A 786-amino-acid polypeptide reads, in one-letter code: Polyribonucleotide nucleotidyltransferase (786 aa).

Residues Asp516 and Asp522 each contribute to the Mg(2+) site. Residues 582–641 form the KH domain; the sequence is PRVTTVKIPVDKIGMVIGPKGQTINAIQDETGAEISIEDDGTIYVGATNGPSAQAAVERV. The 70-residue stretch at 653–722 folds into the S1 motif domain; the sequence is GDRFLGTVVK…QRGKIYLDKV (70 aa). A disordered region spans residues 722 to 786; that stretch reads VRPEGAEGPA…SRPRRRTRHS (65 aa). Residues 727-738 show a composition bias toward low complexity; it reads AEGPAEAAATDR. The span at 739-778 shows a compositional bias: basic and acidic residues; the sequence is PAGRDRGDRAPRDRGDRGDRERGSRGPDRGDGGEGGGESR.

Belongs to the polyribonucleotide nucleotidyltransferase family. Mg(2+) serves as cofactor.

The protein localises to the cytoplasm. It catalyses the reaction RNA(n+1) + phosphate = RNA(n) + a ribonucleoside 5'-diphosphate. Its function is as follows. Involved in mRNA degradation. Catalyzes the phosphorolysis of single-stranded polyribonucleotides processively in the 3'- to 5'-direction. The polypeptide is Polyribonucleotide nucleotidyltransferase (Salinispora arenicola (strain CNS-205)).